Consider the following 132-residue polypeptide: Small ribosomal subunit protein uS8 (132 aa).

Belongs to the universal ribosomal protein uS8 family. In terms of assembly, part of the 30S ribosomal subunit. Contacts proteins S5 and S12.

Functionally, one of the primary rRNA binding proteins, it binds directly to 16S rRNA central domain where it helps coordinate assembly of the platform of the 30S subunit. In Geotalea uraniireducens (strain Rf4) (Geobacter uraniireducens), this protein is Small ribosomal subunit protein uS8.